A 357-amino-acid chain; its full sequence is MRKMKKVMLTTGGTGGHIYPALAVADRLKIKGIEAVFVGSMERMEKDLVPESGHKFIGVDISVPRGLKNIRKYLKAIRTAYKVIKEEKPDAIIGFGNYISVPVIIAGILLRKKIYLQEQNVNIGSANKMFYKIAKMTFLAFDKTYDDIPIKSQSRFKVTGNPLRKEIDGLKYATEREKLGIKPSEKVLLITGGSLGAQEINNIVMKYWEKFCADKNLRIFWATGNNFEQLKKVRKTKKENDRIEPYFNDMLNVMAAADLVVCRAGALTISEIIELEKPAIIIPYGSIKVGQYENAKVLTNYDAAYVFTRDELDESMKRVFEIIRNDEKLKKMRIRLKPLKKPNAAEEIIASLDIWRN.

UDP-N-acetyl-alpha-D-glucosamine-binding positions include 14–16 (TGG), Asn-120, Arg-164, Ser-194, and Gln-291.

The protein belongs to the glycosyltransferase 28 family. MurG subfamily.

It localises to the cell inner membrane. The enzyme catalyses di-trans,octa-cis-undecaprenyl diphospho-N-acetyl-alpha-D-muramoyl-L-alanyl-D-glutamyl-meso-2,6-diaminopimeloyl-D-alanyl-D-alanine + UDP-N-acetyl-alpha-D-glucosamine = di-trans,octa-cis-undecaprenyl diphospho-[N-acetyl-alpha-D-glucosaminyl-(1-&gt;4)]-N-acetyl-alpha-D-muramoyl-L-alanyl-D-glutamyl-meso-2,6-diaminopimeloyl-D-alanyl-D-alanine + UDP + H(+). Its pathway is cell wall biogenesis; peptidoglycan biosynthesis. Its function is as follows. Cell wall formation. Catalyzes the transfer of a GlcNAc subunit on undecaprenyl-pyrophosphoryl-MurNAc-pentapeptide (lipid intermediate I) to form undecaprenyl-pyrophosphoryl-MurNAc-(pentapeptide)GlcNAc (lipid intermediate II). The protein is UDP-N-acetylglucosamine--N-acetylmuramyl-(pentapeptide) pyrophosphoryl-undecaprenol N-acetylglucosamine transferase of Fusobacterium nucleatum subsp. nucleatum (strain ATCC 25586 / DSM 15643 / BCRC 10681 / CIP 101130 / JCM 8532 / KCTC 2640 / LMG 13131 / VPI 4355).